We begin with the raw amino-acid sequence, 185 residues long: Ribosome-recycling factor (185 aa).

It belongs to the RRF family.

It is found in the cytoplasm. Functionally, responsible for the release of ribosomes from messenger RNA at the termination of protein biosynthesis. May increase the efficiency of translation by recycling ribosomes from one round of translation to another. This is Ribosome-recycling factor from Actinobacillus succinogenes (strain ATCC 55618 / DSM 22257 / CCUG 43843 / 130Z).